Consider the following 127-residue polypeptide: Small ribosomal subunit protein uS11c (127 aa).

The protein belongs to the universal ribosomal protein uS11 family. As to quaternary structure, part of the 30S ribosomal subunit.

The protein resides in the plastid. It localises to the chloroplast. The sequence is that of Small ribosomal subunit protein uS11c from Heterosigma akashiwo (strain NIES-293 / 8280G21-1).